A 561-amino-acid polypeptide reads, in one-letter code: Dihydroxy-acid dehydratase (561 aa).

Cysteine 50 serves as a coordination point for [2Fe-2S] cluster. Aspartate 82 contributes to the Mg(2+) binding site. Cysteine 123 contacts [2Fe-2S] cluster. 2 residues coordinate Mg(2+): aspartate 124 and lysine 125. Lysine 125 carries the N6-carboxylysine modification. [2Fe-2S] cluster is bound at residue cysteine 195. Glutamate 447 lines the Mg(2+) pocket. The Proton acceptor role is filled by serine 473.

It belongs to the IlvD/Edd family. As to quaternary structure, homodimer. Requires [2Fe-2S] cluster as cofactor. It depends on Mg(2+) as a cofactor.

The catalysed reaction is (2R)-2,3-dihydroxy-3-methylbutanoate = 3-methyl-2-oxobutanoate + H2O. It carries out the reaction (2R,3R)-2,3-dihydroxy-3-methylpentanoate = (S)-3-methyl-2-oxopentanoate + H2O. Its pathway is amino-acid biosynthesis; L-isoleucine biosynthesis; L-isoleucine from 2-oxobutanoate: step 3/4. It functions in the pathway amino-acid biosynthesis; L-valine biosynthesis; L-valine from pyruvate: step 3/4. Functions in the biosynthesis of branched-chain amino acids. Catalyzes the dehydration of (2R,3R)-2,3-dihydroxy-3-methylpentanoate (2,3-dihydroxy-3-methylvalerate) into 2-oxo-3-methylpentanoate (2-oxo-3-methylvalerate) and of (2R)-2,3-dihydroxy-3-methylbutanoate (2,3-dihydroxyisovalerate) into 2-oxo-3-methylbutanoate (2-oxoisovalerate), the penultimate precursor to L-isoleucine and L-valine, respectively. This Microcystis aeruginosa (strain NIES-843 / IAM M-2473) protein is Dihydroxy-acid dehydratase.